The primary structure comprises 332 residues: uncharacterized protein (332 aa).

Belongs to the peptidase U32 family.

This is an uncharacterized protein from Methanocaldococcus jannaschii (strain ATCC 43067 / DSM 2661 / JAL-1 / JCM 10045 / NBRC 100440) (Methanococcus jannaschii).